Reading from the N-terminus, the 219-residue chain is Ribose-5-phosphate isomerase A (219 aa).

Residues 28–31 (SGST), 81–84 (DGAD), and 94–97 (KGGG) each bind substrate. The active-site Proton acceptor is Glu-103. Lys-121 is a binding site for substrate.

It belongs to the ribose 5-phosphate isomerase family. Homodimer.

It catalyses the reaction aldehydo-D-ribose 5-phosphate = D-ribulose 5-phosphate. Its pathway is carbohydrate degradation; pentose phosphate pathway; D-ribose 5-phosphate from D-ribulose 5-phosphate (non-oxidative stage): step 1/1. Functionally, catalyzes the reversible conversion of ribose-5-phosphate to ribulose 5-phosphate. This chain is Ribose-5-phosphate isomerase A, found in Histophilus somni (strain 2336) (Haemophilus somnus).